We begin with the raw amino-acid sequence, 380 residues long: Transcription factor SOX-7 (380 aa).

Positions 24 to 43 (SDGLSPPAVPRPSGDKSSES) are disordered. Residues 45–113 (IRRPMNAFMV…QHMQDYPNYK (69 aa)) constitute a DNA-binding region (HMG box). Positions 139–167 (SRDQNTLPEKNGIGRGEKEDRGEYSPGAT) are disordered. The 121-residue stretch at 260-380 (VSMMSSVSGC…ATYYNSYSVS (121 aa)) folds into the Sox C-terminal domain. The tract at residues 323 to 328 (EFDQYL) is required for beta-catenin-binding.

In terms of assembly, interacts with CTNNB1/beta-catenin; this interaction may lead to the proteasomal degradation of active CTNNB1 and thus inhibition of Wnt/beta-catenin-stimulated transcription. In terms of tissue distribution, predominantly expressed in ovary, lung and heart. In the ovary, restricted to oocytes (at protein level). Present both in mesenchymal and epithelial cells in some adult tissues, including ear.

Its subcellular location is the nucleus. It is found in the cytoplasm. Binds to and activates the CDH5 promoter, hence plays a role in the transcriptional regulation of genes expressed in the hemogenic endothelium and blocks further differentiation into blood precursors. May be required for the survival of both hematopoietic and endothelial precursors during specification. May play a role in skeletal myogenesis and up-regulate the expression of muscle markers, such as PAX3/PAX7 and Meox1. Competes with GATA4 for binding and activation of the FGF3 promoter. Represses Wnt/beta-catenin-stimulated transcription. Probably acts by targeting CTNNB1 to proteasomal degradation. Binds the DNA sequence 5'-AACAAT-3'. The chain is Transcription factor SOX-7 (Sox7) from Mus musculus (Mouse).